The sequence spans 334 residues: Holliday junction branch migration complex subunit RuvB (334 aa).

Residues 4–184 (ADRLISAAVI…FGIVQRLEFY (181 aa)) are large ATPase domain (RuvB-L). ATP-binding positions include I23, R24, G65, K68, T69, T70, 131–133 (EDY), R174, Y184, and R221. Mg(2+) is bound at residue T69. Residues 185–255 (PVADLEHIVS…VAMKALDMLN (71 aa)) form a small ATPAse domain (RuvB-S) region. A head domain (RuvB-H) region spans residues 258–334 (AEGFDFMDRK…YKHFGITREE (77 aa)). DNA-binding residues include R294, R313, and R318.

Belongs to the RuvB family. Homohexamer. Forms an RuvA(8)-RuvB(12)-Holliday junction (HJ) complex. HJ DNA is sandwiched between 2 RuvA tetramers; dsDNA enters through RuvA and exits via RuvB. An RuvB hexamer assembles on each DNA strand where it exits the tetramer. Each RuvB hexamer is contacted by two RuvA subunits (via domain III) on 2 adjacent RuvB subunits; this complex drives branch migration. In the full resolvosome a probable DNA-RuvA(4)-RuvB(12)-RuvC(2) complex forms which resolves the HJ.

The protein localises to the cytoplasm. It catalyses the reaction ATP + H2O = ADP + phosphate + H(+). The RuvA-RuvB-RuvC complex processes Holliday junction (HJ) DNA during genetic recombination and DNA repair, while the RuvA-RuvB complex plays an important role in the rescue of blocked DNA replication forks via replication fork reversal (RFR). RuvA specifically binds to HJ cruciform DNA, conferring on it an open structure. The RuvB hexamer acts as an ATP-dependent pump, pulling dsDNA into and through the RuvAB complex. RuvB forms 2 homohexamers on either side of HJ DNA bound by 1 or 2 RuvA tetramers; 4 subunits per hexamer contact DNA at a time. Coordinated motions by a converter formed by DNA-disengaged RuvB subunits stimulates ATP hydrolysis and nucleotide exchange. Immobilization of the converter enables RuvB to convert the ATP-contained energy into a lever motion, pulling 2 nucleotides of DNA out of the RuvA tetramer per ATP hydrolyzed, thus driving DNA branch migration. The RuvB motors rotate together with the DNA substrate, which together with the progressing nucleotide cycle form the mechanistic basis for DNA recombination by continuous HJ branch migration. Branch migration allows RuvC to scan DNA until it finds its consensus sequence, where it cleaves and resolves cruciform DNA. The protein is Holliday junction branch migration complex subunit RuvB of Yersinia pestis bv. Antiqua (strain Angola).